The primary structure comprises 624 residues: Chaperone protein HtpG (624 aa).

The tract at residues 1–336 (MKGQETRGFQ…SNDLPLNVSR (336 aa)) is a; substrate-binding. Residues 337 to 552 (EILQDSTVTR…ADEMSTQMAK (216 aa)) are b. The tract at residues 553 to 624 (LFAAAGQSVP…IRRMNQLLVS (72 aa)) is c.

The protein belongs to the heat shock protein 90 family. In terms of assembly, homodimer.

It is found in the cytoplasm. Functionally, molecular chaperone. Has ATPase activity. The chain is Chaperone protein HtpG from Salmonella typhi.